A 223-amino-acid polypeptide reads, in one-letter code: DNA mismatch repair protein MutH (223 aa).

Belongs to the MutH family.

It localises to the cytoplasm. Sequence-specific endonuclease that cleaves unmethylated GATC sequences. It is involved in DNA mismatch repair. This chain is DNA mismatch repair protein MutH, found in Shewanella oneidensis (strain ATCC 700550 / JCM 31522 / CIP 106686 / LMG 19005 / NCIMB 14063 / MR-1).